A 130-amino-acid chain; its full sequence is Sigma-w pathway protein YsdB (130 aa).

A helical transmembrane segment spans residues 2–22 (FVMVLRIILLALFAYCIYAVV).

Its subcellular location is the membrane. Its function is as follows. May mediate a negative feedback loop that down-regulates the expression of the sigma-W regulon following the activation of sigma-W in response to conditions of cell envelope stress. Might interact with and inhibit the activity of the protease PrsW, or could bind to the anti-sigma-W factor RsiW and thereby protect it from PrsW-mediated cleavage. The chain is Sigma-w pathway protein YsdB (ysdB) from Bacillus subtilis (strain 168).